Here is a 108-residue protein sequence, read N- to C-terminus: Thiosulfate sulfurtransferase GlpE (108 aa).

Residues 17–105 (QEKEAVLVDI…WQRQFPAEVA (89 aa)) form the Rhodanese domain. The active-site Cysteine persulfide intermediate is C65.

Belongs to the GlpE family.

The protein resides in the cytoplasm. The enzyme catalyses thiosulfate + hydrogen cyanide = thiocyanate + sulfite + 2 H(+). The catalysed reaction is thiosulfate + [thioredoxin]-dithiol = [thioredoxin]-disulfide + hydrogen sulfide + sulfite + 2 H(+). Its function is as follows. Transferase that catalyzes the transfer of sulfur from thiosulfate to thiophilic acceptors such as cyanide or dithiols. May function in a CysM-independent thiosulfate assimilation pathway by catalyzing the conversion of thiosulfate to sulfite, which can then be used for L-cysteine biosynthesis. The protein is Thiosulfate sulfurtransferase GlpE of Escherichia coli O8 (strain IAI1).